The following is a 160-amino-acid chain: Cytochrome b6-f complex subunit 4 (160 aa).

3 helical membrane-spanning segments follow: residues 36-56, 95-115, and 131-151; these read LLYI…GLAI, LLGV…PFLE, and TVFL…TLPI.

Belongs to the cytochrome b family. PetD subfamily. As to quaternary structure, the 4 large subunits of the cytochrome b6-f complex are cytochrome b6, subunit IV (17 kDa polypeptide, petD), cytochrome f and the Rieske protein, while the 4 small subunits are petG, petL, petM and petN. The complex functions as a dimer.

It localises to the plastid. Its subcellular location is the chloroplast thylakoid membrane. Its function is as follows. Component of the cytochrome b6-f complex, which mediates electron transfer between photosystem II (PSII) and photosystem I (PSI), cyclic electron flow around PSI, and state transitions. In Acorus calamus (Sweet flag), this protein is Cytochrome b6-f complex subunit 4.